The sequence spans 320 residues: Baseplate tail-tube junction protein gp54 (320 aa).

Homohexamer. The tube second annulus is composed of a gp54 hexameric ring. Interacts with the tail tube protein gp19. Interacts with the first layer of sheath proteins gp18. Part of the baseplate macromolecular complex which consists of gp5, gp5.4, gp27 (central spike complex); gp6, gp25, gp53 (inner baseplate); gp7, gp8 (intermediate baseplate); gp9, gp10, gp11, gp12 (peripheral); gp48 and gp54 (proximal region of the tail tube).

It localises to the virion. In terms of biological role, baseplate protein that forms, together with gp48, the baseplate-tail tube junction. The tail tube first 2 annuli are formed by gp48 and gp54, which are in continuation of the spike complex. Involved in the tail assembly. Morphogenesis of the baseplate is completed by association of gp48 and gp54, which bind the upper part of the baseplate dome to form the platform for polymerization of the tail tube. This is Baseplate tail-tube junction protein gp54 (54) from Escherichia coli (Bacteriophage T4).